A 366-amino-acid chain; its full sequence is A-type ATP synthase subunit C (366 aa).

It belongs to the V-ATPase V0D/AC39 subunit family. As to quaternary structure, has multiple subunits with at least A(3), B(3), C, D, E, F, H, I and proteolipid K(x).

It is found in the cell membrane. Functionally, component of the A-type ATP synthase that produces ATP from ADP in the presence of a proton gradient across the membrane. The sequence is that of A-type ATP synthase subunit C from Thermococcus gammatolerans (strain DSM 15229 / JCM 11827 / EJ3).